The chain runs to 251 residues: HTH-type transcriptional regulator UlaR (251 aa).

Residues 3–58 (EAQRHQILLEMLAQLGFVTVEKVVERLGISPATARRDINKLDESGKLKKVRNGAEA) form the HTH deoR-type domain. A DNA-binding region (H-T-H motif) is located at residues 20–39 (VTVEKVVERLGISPATARRD).

It is found in the cytoplasm. In terms of biological role, represses ulaG and the ulaABCDEF operon. This chain is HTH-type transcriptional regulator UlaR, found in Escherichia coli O127:H6 (strain E2348/69 / EPEC).